We begin with the raw amino-acid sequence, 483 residues long: Cysteine--tRNA ligase (483 aa).

Residue Cys29 participates in Zn(2+) binding. Positions 31–41 (ITVYDYCHLGH) match the 'HIGH' region motif. The Zn(2+) site is built by Cys215, His240, and Glu244. The 'KMSKS' region motif lies at 272 to 276 (KMSKS). Residue Lys275 participates in ATP binding.

Belongs to the class-I aminoacyl-tRNA synthetase family. Monomer. The cofactor is Zn(2+).

The protein localises to the cytoplasm. The catalysed reaction is tRNA(Cys) + L-cysteine + ATP = L-cysteinyl-tRNA(Cys) + AMP + diphosphate. This is Cysteine--tRNA ligase (cysS) from Synechocystis sp. (strain ATCC 27184 / PCC 6803 / Kazusa).